The primary structure comprises 438 residues: 3-phosphoshikimate 1-carboxyvinyltransferase 1 (438 aa).

3-phosphoshikimate contacts are provided by Lys-30, Ser-31, and Arg-35. Lys-30 serves as a coordination point for phosphoenolpyruvate. Phosphoenolpyruvate contacts are provided by Gly-104 and Arg-132. 3-phosphoshikimate contacts are provided by Ser-178, Ser-179, Gln-180, Ser-207, Glu-326, and His-353. Position 180 (Gln-180) interacts with phosphoenolpyruvate. The active-site Proton acceptor is Glu-326. Residues Arg-357, Arg-398, and Lys-423 each coordinate phosphoenolpyruvate.

Belongs to the EPSP synthase family. In terms of assembly, monomer.

Its subcellular location is the cytoplasm. It carries out the reaction 3-phosphoshikimate + phosphoenolpyruvate = 5-O-(1-carboxyvinyl)-3-phosphoshikimate + phosphate. The protein operates within metabolic intermediate biosynthesis; chorismate biosynthesis; chorismate from D-erythrose 4-phosphate and phosphoenolpyruvate: step 6/7. Catalyzes the transfer of the enolpyruvyl moiety of phosphoenolpyruvate (PEP) to the 5-hydroxyl of shikimate-3-phosphate (S3P) to produce enolpyruvyl shikimate-3-phosphate and inorganic phosphate. The polypeptide is 3-phosphoshikimate 1-carboxyvinyltransferase 1 (Streptomyces coelicolor (strain ATCC BAA-471 / A3(2) / M145)).